We begin with the raw amino-acid sequence, 169 residues long: S-ribosylhomocysteine lyase (169 aa).

Fe cation is bound by residues H54, H58, and C128.

This sequence belongs to the LuxS family. As to quaternary structure, homodimer. Fe cation is required as a cofactor.

The catalysed reaction is S-(5-deoxy-D-ribos-5-yl)-L-homocysteine = (S)-4,5-dihydroxypentane-2,3-dione + L-homocysteine. Its function is as follows. Involved in the synthesis of autoinducer 2 (AI-2) which is secreted by bacteria and is used to communicate both the cell density and the metabolic potential of the environment. The regulation of gene expression in response to changes in cell density is called quorum sensing. Catalyzes the transformation of S-ribosylhomocysteine (RHC) to homocysteine (HC) and 4,5-dihydroxy-2,3-pentadione (DPD). In Tolumonas auensis (strain DSM 9187 / NBRC 110442 / TA 4), this protein is S-ribosylhomocysteine lyase.